The sequence spans 132 residues: Small ribosomal subunit protein uS8 (132 aa).

This sequence belongs to the universal ribosomal protein uS8 family. Part of the 30S ribosomal subunit. Contacts proteins S5 and S12.

Functionally, one of the primary rRNA binding proteins, it binds directly to 16S rRNA central domain where it helps coordinate assembly of the platform of the 30S subunit. In Paracoccus denitrificans (strain Pd 1222), this protein is Small ribosomal subunit protein uS8.